The following is a 189-amino-acid chain: Isopentenyl-diphosphate Delta-isomerase (189 aa).

Mn(2+) contacts are provided by His27 and His34. The region spanning 32–171 (PLHFAFSTYI…PFVFSPWLVD (140 aa)) is the Nudix hydrolase domain. Cys69 is an active-site residue. Cys69 serves as a coordination point for Mg(2+). His71 is a binding site for Mn(2+). Residue Glu89 coordinates Mg(2+). Mn(2+) contacts are provided by Glu119 and Glu121. The active site involves Glu121.

It belongs to the IPP isomerase type 1 family. The cofactor is Mg(2+). Mn(2+) is required as a cofactor.

The protein resides in the cytoplasm. It carries out the reaction isopentenyl diphosphate = dimethylallyl diphosphate. It participates in isoprenoid biosynthesis; dimethylallyl diphosphate biosynthesis; dimethylallyl diphosphate from isopentenyl diphosphate: step 1/1. Functionally, catalyzes the 1,3-allylic rearrangement of the homoallylic substrate isopentenyl (IPP) to its highly electrophilic allylic isomer, dimethylallyl diphosphate (DMAPP). This Corynebacterium glutamicum (strain ATCC 13032 / DSM 20300 / JCM 1318 / BCRC 11384 / CCUG 27702 / LMG 3730 / NBRC 12168 / NCIMB 10025 / NRRL B-2784 / 534) protein is Isopentenyl-diphosphate Delta-isomerase.